The following is a 496-amino-acid chain: Glycerol kinase (496 aa).

Position 11 (Thr11) interacts with ADP. 3 residues coordinate ATP: Thr11, Thr12, and Ser13. Residue Thr11 coordinates sn-glycerol 3-phosphate. Residue Arg15 coordinates ADP. Sn-glycerol 3-phosphate contacts are provided by Arg81, Glu82, Tyr133, and Asp242. Glycerol-binding residues include Arg81, Glu82, Tyr133, Asp242, and Gln243. ADP contacts are provided by Thr264 and Gly307. Thr264, Gly307, Gln311, and Gly408 together coordinate ATP. ADP is bound by residues Gly408 and Asn412.

It belongs to the FGGY kinase family.

The enzyme catalyses glycerol + ATP = sn-glycerol 3-phosphate + ADP + H(+). Its pathway is polyol metabolism; glycerol degradation via glycerol kinase pathway; sn-glycerol 3-phosphate from glycerol: step 1/1. Its activity is regulated as follows. Inhibited by fructose 1,6-bisphosphate (FBP). Key enzyme in the regulation of glycerol uptake and metabolism. Catalyzes the phosphorylation of glycerol to yield sn-glycerol 3-phosphate. This is Glycerol kinase from Aromatoleum aromaticum (strain DSM 19018 / LMG 30748 / EbN1) (Azoarcus sp. (strain EbN1)).